The chain runs to 202 residues: Dephospho-CoA kinase (202 aa).

A DPCK domain is found at 3–201 (AIGLTGGIGS…QRYLGFAAAA (199 aa)). 11 to 16 (GSGKTT) contacts ATP.

This sequence belongs to the CoaE family.

The protein resides in the cytoplasm. It carries out the reaction 3'-dephospho-CoA + ATP = ADP + CoA + H(+). Its pathway is cofactor biosynthesis; coenzyme A biosynthesis; CoA from (R)-pantothenate: step 5/5. Catalyzes the phosphorylation of the 3'-hydroxyl group of dephosphocoenzyme A to form coenzyme A. In Burkholderia lata (strain ATCC 17760 / DSM 23089 / LMG 22485 / NCIMB 9086 / R18194 / 383), this protein is Dephospho-CoA kinase.